The sequence spans 346 residues: MDISDFDFTLPEKLIAQHPPEVRGSSRLLVALPDMPLQDRVFGDLPDYVEAGDVLVFNNTKVMKARLFGQKDSGGRIEALIERVLDSHTALAHIRSSKSPKPGMGLVFEGGIRAVMVGREGELFCLRFEGGETVYELLEQNGHLPLPPYIERAADADDDSRYQTVYAKYQGAVAAPTAGLHFTEELLRRLKDKGAVTAEVTLHVGAGTFQPVRVDKIEEHKMHSEWFEVPSETAAAVEAAKARGNKVWAVGTTSMRALESAARATGRLKAGQGDTDIFITPGYRFNVVDRLVTNFHLPKSTLLMLVSAFSGMGHIRAAYRHAVEREYRFFSYGDAMVLGRNEGVVR.

This sequence belongs to the QueA family. As to quaternary structure, monomer.

Its subcellular location is the cytoplasm. It carries out the reaction 7-aminomethyl-7-carbaguanosine(34) in tRNA + S-adenosyl-L-methionine = epoxyqueuosine(34) in tRNA + adenine + L-methionine + 2 H(+). Its pathway is tRNA modification; tRNA-queuosine biosynthesis. Transfers and isomerizes the ribose moiety from AdoMet to the 7-aminomethyl group of 7-deazaguanine (preQ1-tRNA) to give epoxyqueuosine (oQ-tRNA). The chain is S-adenosylmethionine:tRNA ribosyltransferase-isomerase from Neisseria meningitidis serogroup C (strain 053442).